A 657-amino-acid polypeptide reads, in one-letter code: N-acetylgalactosaminyltransferase 7 (657 aa).

At 1–6 (MRLKIG) the chain is on the cytoplasmic side. Residues 7 to 29 (FILRSLLVVGSFLGLVVLWSSLS) traverse the membrane as a helical; Signal-anchor for type II membrane protein segment. The segment at 30–66 (SRPDDPSPLSRMREDRDVNNPLPNRGGNGLAPGDDRF) is disordered. The Lumenal segment spans residues 30–657 (SRPDDPSPLS…KWEMNNIHSV (628 aa)). 5 cysteine pairs are disulfide-bonded: C197/C435, C426/C507, C545/C562, C585/C600, and C625/C640. The interval 206 to 317 (LLTSSVVIVF…VNWYAPLVAP (112 aa)) is catalytic subdomain A. The substrate site is built by D247 and R277. Mn(2+) contacts are provided by D301 and H303. Residues 381–443 (PYRSPAMAGG…PCSRVGHIYR (63 aa)) form a catalytic subdomain B region. A substrate-binding site is contributed by W412. H440 is a binding site for Mn(2+). R443 contributes to the substrate binding site. Positions 532 to 652 (VEWGEIRGLE…GKMTQKWEMN (121 aa)) constitute a Ricin B-type lectin domain.

Belongs to the glycosyltransferase 2 family. GalNAc-T subfamily. The cofactor is Mn(2+). In terms of tissue distribution, highly expressed in sublingual gland. Expressed at lower level in stomach, small intestiine and colon.

It localises to the golgi apparatus membrane. It carries out the reaction L-seryl-[protein] + UDP-N-acetyl-alpha-D-galactosamine = a 3-O-[N-acetyl-alpha-D-galactosaminyl]-L-seryl-[protein] + UDP + H(+). The catalysed reaction is L-threonyl-[protein] + UDP-N-acetyl-alpha-D-galactosamine = a 3-O-[N-acetyl-alpha-D-galactosaminyl]-L-threonyl-[protein] + UDP + H(+). The protein operates within protein modification; protein glycosylation. In terms of biological role, glycopeptide transferase involved in O-linked oligosaccharide biosynthesis, which catalyzes the transfer of an N-acetyl-D-galactosamine residue to an already glycosylated peptide. In contrast to other proteins of the family, it does not act as a peptide transferase that transfers GalNAc onto serine or threonine residue on the protein receptor, but instead requires the prior addition of a GalNAc on a peptide before adding additional GalNAc moieties. Some peptide transferase activity is however not excluded, considering that its appropriate peptide substrate may remain unidentified. The chain is N-acetylgalactosaminyltransferase 7 (Galnt7) from Rattus norvegicus (Rat).